The following is a 671-amino-acid chain: DNA ligase (671 aa).

NAD(+) contacts are provided by residues 32–36, 81–82, and glutamate 114; these read DVEYD and SL. Lysine 116 serves as the catalytic N6-AMP-lysine intermediate. Residues arginine 137, glutamate 175, lysine 292, and lysine 316 each coordinate NAD(+). Zn(2+)-binding residues include cysteine 410, cysteine 413, cysteine 428, and cysteine 434. The region spanning 592 to 671 is the BRCT domain; sequence EKNNYFSGKN…AEFYQILGIR (80 aa).

This sequence belongs to the NAD-dependent DNA ligase family. LigA subfamily. Mg(2+) serves as cofactor. The cofactor is Mn(2+).

It catalyses the reaction NAD(+) + (deoxyribonucleotide)n-3'-hydroxyl + 5'-phospho-(deoxyribonucleotide)m = (deoxyribonucleotide)n+m + AMP + beta-nicotinamide D-nucleotide.. Its function is as follows. DNA ligase that catalyzes the formation of phosphodiester linkages between 5'-phosphoryl and 3'-hydroxyl groups in double-stranded DNA using NAD as a coenzyme and as the energy source for the reaction. It is essential for DNA replication and repair of damaged DNA. This chain is DNA ligase, found in Baumannia cicadellinicola subsp. Homalodisca coagulata.